The primary structure comprises 46 residues: GGCIKWNHSCQTTTLKCCGKCVVCYCHTPWGTNCRCDRTRLFCTED.

5 disulfides stabilise this stretch: Cys-3–Cys-18, Cys-10–Cys-24, Cys-17–Cys-36, Cys-21–Cys-43, and Cys-26–Cys-34.

It belongs to the neurotoxin 02 (plectoxin) family. 02 (plectoxin) subfamily. In terms of tissue distribution, expressed by the venom gland.

It is found in the secreted. In terms of biological role, competes for binding at site 3 of the insect voltage-gated sodium channel (Nav). Insecticidal neurotoxin. Causes temporary paralysis to lepidopteran larvae (10.3 nmol/g) or to crickets (doses from 0.93 to 119 ug/g). Is not toxic to mice when injected intracranially (high doses). The polypeptide is Mu-hexatoxin-Mg2a (Macrothele gigas (Japanese funnel web spider)).